A 189-amino-acid polypeptide reads, in one-letter code: Ribosome maturation factor RimM (189 aa).

A PRC barrel domain is found at 113–189 (DGEYYWVDLL…TIVADWQPDY (77 aa)).

The protein belongs to the RimM family. In terms of assembly, binds ribosomal protein uS19.

The protein localises to the cytoplasm. Its function is as follows. An accessory protein needed during the final step in the assembly of 30S ribosomal subunit, possibly for assembly of the head region. Essential for efficient processing of 16S rRNA. May be needed both before and after RbfA during the maturation of 16S rRNA. It has affinity for free ribosomal 30S subunits but not for 70S ribosomes. This Delftia acidovorans (strain DSM 14801 / SPH-1) protein is Ribosome maturation factor RimM.